A 490-amino-acid chain; its full sequence is MVPVVALVGRPNVGKSTLFNRLTRTRDALVADFPGLTRDRKYGRAEIEGREFICIDTGGIDGTEDGVETRMAEQSLLAIEEADVVLFMVDARAGLMPADEAIAKHLRSREKPTFLVVNKTDGLDPDQAVVDFYSLGLGEIYPIAASHGRGVLSLLEHVLLPWMEDLAPQEEVDEDAEYWAQFEAEENGEEEEEDDFDPQSLPIKLAIVGRPNVGKSTLTNRILGEERVVVYDMPGTTRDSIYIPMERDGREYVLIDTAGVRKRGKITDAVEKFSVIKTLQAIEDANVVMLVIDAREGISDQDLSLLGFILNSGRSLVIVVNKWDGLSQEVKEQVKETLDFRLGFIDFARVHFISALHGSGVGNLFESVREAYDSSTRRVGTSMLTRIMTMAVEDHQPPLVRGRRVKLKYAHAGGYNPPIVVIHGNQVKDLPDSYKRYLMNYFRKSLDVMGSPIRIQFKEGENPYANKRNTLTPTQMRKRKRLMKHIKKNK.

EngA-type G domains are found at residues 3–166 (PVVA…MEDL) and 203–376 (IKLA…DSST). GTP contacts are provided by residues 9–16 (GRPNVGKS), 56–60 (DTGGI), 118–121 (NKTD), 209–216 (GRPNVGKS), 256–260 (DTAGV), and 321–324 (NKWD). A KH-like domain is found at 377 to 461 (RRVGTSMLTR…PIRIQFKEGE (85 aa)).

The protein belongs to the TRAFAC class TrmE-Era-EngA-EngB-Septin-like GTPase superfamily. EngA (Der) GTPase family. Associates with the 50S ribosomal subunit.

In terms of biological role, GTPase that plays an essential role in the late steps of ribosome biogenesis. This is GTPase Der from Shigella flexneri serotype 5b (strain 8401).